The sequence spans 83 residues: Small ribosomal subunit protein uS17c (83 aa).

The protein belongs to the universal ribosomal protein uS17 family. In terms of assembly, part of the 30S ribosomal subunit.

The protein resides in the plastid. It is found in the chloroplast. In terms of biological role, one of the primary rRNA binding proteins, it binds specifically to the 5'-end of 16S ribosomal RNA. In Porphyra purpurea (Red seaweed), this protein is Small ribosomal subunit protein uS17c (rps17).